A 172-amino-acid polypeptide reads, in one-letter code: NAD(P)H-quinone oxidoreductase subunit J (172 aa).

Belongs to the complex I 30 kDa subunit family. As to quaternary structure, NDH-1 can be composed of about 15 different subunits; different subcomplexes with different compositions have been identified which probably have different functions.

The protein resides in the cellular thylakoid membrane. It catalyses the reaction a plastoquinone + NADH + (n+1) H(+)(in) = a plastoquinol + NAD(+) + n H(+)(out). The enzyme catalyses a plastoquinone + NADPH + (n+1) H(+)(in) = a plastoquinol + NADP(+) + n H(+)(out). NDH-1 shuttles electrons from an unknown electron donor, via FMN and iron-sulfur (Fe-S) centers, to quinones in the respiratory and/or the photosynthetic chain. The immediate electron acceptor for the enzyme in this species is believed to be plastoquinone. Couples the redox reaction to proton translocation, and thus conserves the redox energy in a proton gradient. Cyanobacterial NDH-1 also plays a role in inorganic carbon-concentration. This chain is NAD(P)H-quinone oxidoreductase subunit J, found in Synechococcus elongatus (strain ATCC 33912 / PCC 7942 / FACHB-805) (Anacystis nidulans R2).